The primary structure comprises 551 residues: Membrane protein insertase YidC (551 aa).

A helical transmembrane segment spans residues 3 to 23; the sequence is ANHIRILLLVTIAIMFISLMG. Residues 33 to 47 show a composition bias toward polar residues; that stretch reads NTKQQTSATQNNSHY. The segment at 33–59 is disordered; that stretch reads NTKQQTSATQNNSHYDNADSSTNTDVT. Low complexity predominate over residues 50–59; sequence ADSSTNTDVT. The next 3 membrane-spanning stretches (helical) occupy residues 361–381, 431–451, and 504–524; these read LVGNWGLAIILVTCLIKLIFY, LSGCLPMLIQIPIFISLYWVL, and VMMFLPVIFTFLFASFPSGLV.

This sequence belongs to the OXA1/ALB3/YidC family. Type 1 subfamily. In terms of assembly, interacts with the Sec translocase complex via SecD. Specifically interacts with transmembrane segments of nascent integral membrane proteins during membrane integration.

The protein resides in the cell inner membrane. Its function is as follows. Required for the insertion and/or proper folding and/or complex formation of integral membrane proteins into the membrane. Involved in integration of membrane proteins that insert both dependently and independently of the Sec translocase complex, as well as at least some lipoproteins. Aids folding of multispanning membrane proteins. The protein is Membrane protein insertase YidC of Francisella tularensis subsp. tularensis (strain SCHU S4 / Schu 4).